A 440-amino-acid chain; its full sequence is Protein naked cuticle homolog 1 (440 aa).

Glycine 2 carries N-myristoyl glycine lipidation. In terms of domain architecture, EF-hand spans 129–164 (EEDNRQEWTFTLYDFDNNGKVTREDITSLLHTIYEV). Ca(2+) is bound by residues aspartate 142, aspartate 144, asparagine 146, lysine 148, and aspartate 153. Over residues 192 to 204 (RWKNCTQTNTDTP) the composition is skewed to polar residues. Disordered regions lie at residues 192 to 221 (RWKN…KTSE), 272 to 379 (AAPA…QRPK), and 421 to 440 (RHEH…FYQS). Residues 211–221 (EKCIEDSKTSE) are compositionally biased toward basic and acidic residues. Residues 272–293 (AAPATEPAKPTHATRSSNQSRS) are compositionally biased toward low complexity. Over residues 324–336 (RHTHALRSPKTHR) the composition is skewed to basic residues. Pro residues predominate over residues 352-362 (APPPPSVPNQT). Positions 422–440 (HEHHHHHEHHHHYHHFYQS) are enriched in basic residues.

Belongs to the NKD family.

It is found in the cell membrane. The protein localises to the cytoplasm. Cell autonomous antagonist of the canonical Wnt signaling pathway. May activate a second Wnt signaling pathway that controls planar cell polarity. This is Protein naked cuticle homolog 1 (nkd1) from Danio rerio (Zebrafish).